Consider the following 341-residue polypeptide: uncharacterized protein (341 aa).

10 helical membrane passes run 10-30 (ALGVVLLLFVVFLWLISSFLT), 42-62 (PFLITYINTGTFVFYLIPWYF), 107-127 (LGFCIIWFAANYFSNSSLGFT), 129-149 (VASFTIISSMSGFFTLGLGTI), 155-175 (FTLSKLLALMASVGGVIIVVT), 192-212 (ALGNAYALLAALLYGCYSVMV), 226-246 (LFFGLVGLFDLILLWPFLIIL), 263-283 (LIVLIINASITFVSDYLWVIA), 290-310 (LLVTVGMSLSIPLALFFDILL), and 313-333 (HYLNFSLILGSLLVFAGFIVV).

This sequence belongs to the TPT transporter family.

Its subcellular location is the vacuole membrane. The protein resides in the golgi apparatus membrane. This is an uncharacterized protein from Schizosaccharomyces pombe (strain 972 / ATCC 24843) (Fission yeast).